Here is a 257-residue protein sequence, read N- to C-terminus: 5'-nucleotidase SurE (257 aa).

D8, D9, S40, and N92 together coordinate a divalent metal cation.

Belongs to the SurE nucleotidase family. A divalent metal cation is required as a cofactor.

It localises to the cytoplasm. It catalyses the reaction a ribonucleoside 5'-phosphate + H2O = a ribonucleoside + phosphate. Its function is as follows. Nucleotidase that shows phosphatase activity on nucleoside 5'-monophosphates. The polypeptide is 5'-nucleotidase SurE (Rhizobium leguminosarum bv. trifolii (strain WSM2304)).